The primary structure comprises 479 residues: MQTNIGLIGLAVMGKNLVLNMIDHGFSVSVYNRTPEKTRDFLKEYPNHRELVGFESLEDFVNSLERPRKIMLMIQAGKPVDQSIHALLPFLEPGDVIIDGGNSYFKDSERRCKELQEKGILFLGVGISGGEEGARHGPSIMPGGNPEAWPLVAPIFQSIAAKVQGRPCCSWVGTGGAGHYVKAVHNGIEYGDIQLICEAYGILRDFLKLSATAVATILKEWNTLELESYLIRIASEVLALKDPEGIPVIDTILDVVGQKGTGKWTAIDALNSGVPLSLIIGAVLARFLSSWKEIREQAARNYPGTPLIFEMPHDPSVFIQDVFHALYASKIISYAQGFMLLGEASKEYNWGLDLGEIALMWRGGCIIQSAFLDVIHKGFAANPENTSLIFQEYFRGALRHAEMGWRRTVVTAIGAGLPIPCLAAAITFYDGYRTASSSMSLAQGLRDYFGAHTYERNDRPRGEFYHTDWVHTKTTERVK.

Residues 9 to 14, 32 to 34, 74 to 76, and asparagine 102 contribute to the NADP(+) site; these read GLAVMG, NRT, and IQA. Substrate contacts are provided by residues asparagine 102 and 128–130; that span reads SGG. Lysine 182 acts as the Proton acceptor in catalysis. 185–186 lines the substrate pocket; that stretch reads HN. The active-site Proton donor is the glutamate 189. 5 residues coordinate substrate: tyrosine 190, lysine 259, arginine 286, arginine 446, and histidine 452.

This sequence belongs to the 6-phosphogluconate dehydrogenase family. In terms of assembly, homodimer.

The catalysed reaction is 6-phospho-D-gluconate + NADP(+) = D-ribulose 5-phosphate + CO2 + NADPH. It functions in the pathway carbohydrate degradation; pentose phosphate pathway; D-ribulose 5-phosphate from D-glucose 6-phosphate (oxidative stage): step 3/3. Catalyzes the oxidative decarboxylation of 6-phosphogluconate to ribulose 5-phosphate and CO(2), with concomitant reduction of NADP to NADPH. This is 6-phosphogluconate dehydrogenase, decarboxylating (gnd) from Chlamydia pneumoniae (Chlamydophila pneumoniae).